The primary structure comprises 501 residues: MNGSLDHPDQPDIDSIKMFVGQIPRTWSEDQLRELFEPYGAVYEINVLRDRSQNPPQSKGCCFVTYYTRKSALEAQNALHNMKILPGMHHPIQMKPADSEKNNAVEDRKLFVGMISKKCNENDIRLMFSPYGQIEECRILRGPDGLSRGCAFVTFTARQMAQSAIKSMHQSQTMEGCSSPIVVKFADTQKDKEQKRIAQQLQQQMQQLNAASMWGNLTGLNSLGPQYLALYLQLLQQSASSGNALNNLHPMSGLNAMQNLAALAAAASATQATPTGSSALTTSSSPLSVLTSSGTPSGQPAQSAWDAYKAGSSPTSSTSSSVNPMASLGALQSLAAGAGAGLNMSSLASMAALNGGLGSGGLSNGSGSTMEALTQAAYSGIQQYAAAALPSLYSQSLLSQQNVSAAGSQKEGPEGANLFIYHLPQEFGDQDLLQMFMPFGNVISAKVFIDKQTNLSKCFGFVSYDNPVSSQAAIQSMNGFQIGMKRLKVQLKRSKNDSKPY.

Residues 2 to 196 are binds strongly to URE; it reads NGSLDHPDQP…DTQKDKEQKR (195 aa). RRM domains are found at residues 16 to 99 and 108 to 188; these read IKMF…PADS and RKLF…FADT. Low complexity-rich tracts occupy residues 274-298 and 312-323; these read PTGS…TPSG and SSPTSSTSSSVN. The disordered stretch occupies residues 274–323; it reads PTGSSALTTSSSPLSVLTSSGTPSGQPAQSAWDAYKAGSSPTSSTSSSVN. Positions 397 to 501 are binds strongly to URE; that stretch reads LLSQQNVSAA…KRSKNDSKPY (105 aa). The 79-residue stretch at 416–494 folds into the RRM 3 domain; it reads ANLFIYHLPQ…KRLKVQLKRS (79 aa).

The protein belongs to the CELF/BRUNOL family.

Its subcellular location is the nucleus. The protein localises to the cytoplasm. Its function is as follows. RNA-binding protein implicated in the regulation of several post-transcriptional events. May be involved in mRNA translation activation and stability. Involved in the regulation of muscle-specific splicing of alpha actinin pre-mRNAs via the binding to the UR-repeat element (URE) at the branch point of the non-muscle (NM) exon. This is CUGBP Elav-like family member 1 (celf1) from Danio rerio (Zebrafish).